The primary structure comprises 76 residues: Small ribosomal subunit protein bS18 (76 aa).

It belongs to the bacterial ribosomal protein bS18 family. In terms of assembly, part of the 30S ribosomal subunit. Forms a tight heterodimer with protein bS6.

Its function is as follows. Binds as a heterodimer with protein bS6 to the central domain of the 16S rRNA, where it helps stabilize the platform of the 30S subunit. The chain is Small ribosomal subunit protein bS18 from Aeromonas salmonicida (strain A449).